Consider the following 234-residue polypeptide: Heme-copper oxidase subunit 2 (234 aa).

2 helical membrane passes run 13 to 33 (LFLLFTAVGVLAAGTVTAFFI) and 72 to 92 (LLFVTGIIVMGLIVATIDETL). Cu cation contacts are provided by H151, C188, C192, and H196.

Belongs to the cytochrome c oxidase subunit 2 family.

Its subcellular location is the cell membrane. In Aeropyrum pernix (strain ATCC 700893 / DSM 11879 / JCM 9820 / NBRC 100138 / K1), this protein is Heme-copper oxidase subunit 2 (aoxA).